The chain runs to 459 residues: uncharacterized protein (459 aa).

The protein belongs to the Rab GDI family.

Its subcellular location is the cytoplasm. It localises to the nucleus. This is an uncharacterized protein from Schizosaccharomyces pombe (strain 972 / ATCC 24843) (Fission yeast).